The primary structure comprises 452 residues: COBRA-like protein 1 (452 aa).

The signal sequence occupies residues 1 to 33; it reads MGFFLCSSSSIFFKFGISIIFLVSFSGLTPSEA. Residues Asn-42, Asn-167, Asn-175, Asn-214, Asn-239, Asn-254, Asn-323, Asn-338, and Asn-357 are each glycosylated (N-linked (GlcNAc...) asparagine). Residue Ser-432 is the site of GPI-anchor amidated serine attachment. The propeptide at 433–452 is removed in mature form; it reads VGSLFAAMALLLIVFLHGNL.

This sequence belongs to the COBRA family. Expressed in roots, stems, leaves, flowers and siliques.

It is found in the cell membrane. In Arabidopsis thaliana (Mouse-ear cress), this protein is COBRA-like protein 1 (COBL1).